The following is a 300-amino-acid chain: ETS homologous factor (300 aa).

One can recognise a PNT domain in the interval 29–115; the sequence is STCNVSSGFF…SNLQHLKWNG (87 aa). Positions 183 to 202 are disordered; the sequence is ESPDMKKEQDPPAKCHTKKH. A compositionally biased stretch (basic and acidic residues) spans 185–195; sequence PDMKKEQDPPA. Residues 207–289 constitute a DNA-binding region (ETS); sequence THLWEFIRDI…DGRRLVYKFG (83 aa).

It belongs to the ETS family.

Its subcellular location is the nucleus. Transcriptional activator that may play a role in regulating epithelial cell differentiation and proliferation. May act as a repressor for a specific subset of ETS/AP-1-responsive genes, and as a modulator of the nuclear response to mitogen-activated protein kinase signaling cascades. Binds to DNA sequences containing the consensus nucleotide core sequence GGAA. Involved in regulation of TNFRSF10B/DR5 expression through Ets-binding sequences on the TNFRSF10B/DR5 promoter. The chain is ETS homologous factor (EHF) from Pan troglodytes (Chimpanzee).